We begin with the raw amino-acid sequence, 209 residues long: Transcription elongation factor A protein-like 4 (209 aa).

At Met-1 the chain carries N-acetylmethionine. Residues 1-125 form a disordered region; it reads MEKLYNENEG…VPRKAKRKTN (125 aa). A compositionally biased stretch (basic and acidic residues) spans 25-96; it reads QDERKPEVAC…GSEREGKPES (72 aa). Residues Ser-88 and Ser-96 each carry the phosphoserine modification.

Belongs to the TFS-II family. TFA subfamily.

It localises to the nucleus. May be involved in transcriptional regulation. The chain is Transcription elongation factor A protein-like 4 (TCEAL4) from Pongo abelii (Sumatran orangutan).